We begin with the raw amino-acid sequence, 73 residues long: Pelophylaxin-1 (73 aa).

An N-terminal signal peptide occupies residues 1–22; the sequence is MFTMKKSLLLVFFLGTIALSLC. The propeptide occupies 23–41; sequence EEERGADDDNGGEITDEEI. Cysteines 67 and 73 form a disulfide.

In terms of tissue distribution, expressed by the skin glands.

The protein localises to the secreted. Functionally, antimicrobial peptide. This is Pelophylaxin-1 from Pelophylax fukienensis (Fukien gold-striped pond frog).